A 269-amino-acid chain; its full sequence is Phosphate import ATP-binding protein PstB (269 aa).

The ABC transporter domain maps to 22-264 (AEVRDLNFYY…PVQQKTADYV (243 aa)). Residue 54–61 (GPSGCGKT) coordinates ATP.

The protein belongs to the ABC transporter superfamily. Phosphate importer (TC 3.A.1.7) family. As to quaternary structure, the complex is composed of two ATP-binding proteins (PstB), two transmembrane proteins (PstC and PstA) and a solute-binding protein (PstS).

It is found in the cell inner membrane. It carries out the reaction phosphate(out) + ATP + H2O = ADP + 2 phosphate(in) + H(+). Its function is as follows. Part of the ABC transporter complex PstSACB involved in phosphate import. Responsible for energy coupling to the transport system. The protein is Phosphate import ATP-binding protein PstB of Thermosynechococcus vestitus (strain NIES-2133 / IAM M-273 / BP-1).